We begin with the raw amino-acid sequence, 62 residues long: DNA-directed RNA polymerase subunit Rpo10 (62 aa).

Positions 6, 9, 43, and 44 each coordinate Zn(2+).

It belongs to the archaeal Rpo10/eukaryotic RPB10 RNA polymerase subunit family. Part of the RNA polymerase complex. The cofactor is Zn(2+).

The protein localises to the cytoplasm. It carries out the reaction RNA(n) + a ribonucleoside 5'-triphosphate = RNA(n+1) + diphosphate. Its function is as follows. DNA-dependent RNA polymerase (RNAP) catalyzes the transcription of DNA into RNA using the four ribonucleoside triphosphates as substrates. This chain is DNA-directed RNA polymerase subunit Rpo10, found in Methanosphaerula palustris (strain ATCC BAA-1556 / DSM 19958 / E1-9c).